The chain runs to 584 residues: Methionine--tRNA ligase (584 aa).

Residues 12–22 carry the 'HIGH' region motif; the sequence is PYANGDLHLGH. 4 residues coordinate Zn(2+): C144, C147, C157, and C160. The 'KMSKS' region signature appears at 334–338; sequence QFSTS. ATP is bound at residue T337. The tract at residues 541-563 is disordered; the sequence is EGRDRWAPSELEAGRPLPPPQPL.

The protein belongs to the class-I aminoacyl-tRNA synthetase family. MetG type 1 subfamily. As to quaternary structure, monomer. It depends on Zn(2+) as a cofactor.

It is found in the cytoplasm. It catalyses the reaction tRNA(Met) + L-methionine + ATP = L-methionyl-tRNA(Met) + AMP + diphosphate. Is required not only for elongation of protein synthesis but also for the initiation of all mRNA translation through initiator tRNA(fMet) aminoacylation. The sequence is that of Methionine--tRNA ligase from Thermomicrobium roseum (strain ATCC 27502 / DSM 5159 / P-2).